We begin with the raw amino-acid sequence, 309 residues long: Homoserine O-succinyltransferase (309 aa).

The Acyl-thioester intermediate role is filled by Cys142. Residues Lys163 and Ser192 each contribute to the substrate site. His235 (proton acceptor) is an active-site residue. Residue Glu237 is part of the active site. Arg249 provides a ligand contact to substrate.

Belongs to the MetA family. As to quaternary structure, homodimer.

The protein localises to the cytoplasm. It catalyses the reaction L-homoserine + succinyl-CoA = O-succinyl-L-homoserine + CoA. It functions in the pathway amino-acid biosynthesis; L-methionine biosynthesis via de novo pathway; O-succinyl-L-homoserine from L-homoserine: step 1/1. Functionally, transfers a succinyl group from succinyl-CoA to L-homoserine, forming succinyl-L-homoserine. In Salmonella arizonae (strain ATCC BAA-731 / CDC346-86 / RSK2980), this protein is Homoserine O-succinyltransferase.